Consider the following 102-residue polypeptide: Protein translation factor SUI1 homolog (102 aa).

Belongs to the SUI1 family.

The protein is Protein translation factor SUI1 homolog of Methanosarcina mazei (strain ATCC BAA-159 / DSM 3647 / Goe1 / Go1 / JCM 11833 / OCM 88) (Methanosarcina frisia).